The sequence spans 361 residues: Alcohol dehydrogenase 9 (361 aa).

8 residues coordinate Zn(2+): cysteine 51, threonine 53, histidine 73, cysteine 104, cysteine 107, cysteine 110, cysteine 118, and cysteine 167. The an alcohol site is built by threonine 53 and histidine 73. Threonine 53 lines the NAD(+) pocket. Residues 192 to 197, lysine 221, 278 to 280, and lysine 356 each bind NAD(+); these read GLGGLG and LGA.

It belongs to the zinc-containing alcohol dehydrogenase family. Class-III subfamily. Homodimer. The cofactor is Zn(2+).

This Catharanthus roseus (Madagascar periwinkle) protein is Alcohol dehydrogenase 9.